We begin with the raw amino-acid sequence, 532 residues long: Glucose-6-phosphate isomerase (532 aa).

Glutamate 322 (proton donor) is an active-site residue. Residues histidine 351 and lysine 457 contribute to the active site.

Belongs to the GPI family.

It localises to the cytoplasm. The enzyme catalyses alpha-D-glucose 6-phosphate = beta-D-fructose 6-phosphate. It functions in the pathway carbohydrate biosynthesis; gluconeogenesis. Its pathway is carbohydrate degradation; glycolysis; D-glyceraldehyde 3-phosphate and glycerone phosphate from D-glucose: step 2/4. In terms of biological role, catalyzes the reversible isomerization of glucose-6-phosphate to fructose-6-phosphate. The polypeptide is Glucose-6-phosphate isomerase (Synechococcus sp. (strain JA-3-3Ab) (Cyanobacteria bacterium Yellowstone A-Prime)).